Here is a 123-residue protein sequence, read N- to C-terminus: WAP four-disulfide core domain protein 5 (123 aa).

The signal sequence occupies residues 1 to 24; the sequence is MRTQSLLLLGALLAVGSQLPAVFG. WAP domains are found at residues 27 to 74 and 75 to 121; these read KGEK…VPRV and SVKL…RDPA. Cystine bridges form between C34/C62, C41/C66, C49/C61, C55/C70, C81/C109, C88/C113, C96/C108, and C102/C117.

The protein resides in the secreted. Its function is as follows. Putative acid-stable proteinase inhibitor. The sequence is that of WAP four-disulfide core domain protein 5 (WFDC5) from Gorilla gorilla gorilla (Western lowland gorilla).